The chain runs to 453 residues: GTPase Der (453 aa).

2 EngA-type G domains span residues 4–169 and 177–352; these read PIVA…PPVT and IKIA…EEHK. GTP is bound by residues 10–17, 57–61, 120–123, 183–190, 230–234, and 295–298; these read GRPNVGKS, DTGGL, NKCE, DTAGI, and NKWD. One can recognise a KH-like domain in the interval 353-438; sequence RRVSTSVINE…PIRLLWRSKK (86 aa).

The protein belongs to the TRAFAC class TrmE-Era-EngA-EngB-Septin-like GTPase superfamily. EngA (Der) GTPase family. Associates with the 50S ribosomal subunit.

In terms of biological role, GTPase that plays an essential role in the late steps of ribosome biogenesis. The sequence is that of GTPase Der from Nostoc sp. (strain PCC 7120 / SAG 25.82 / UTEX 2576).